The sequence spans 102 residues: Putative pterin-4-alpha-carbinolamine dehydratase (102 aa).

Belongs to the pterin-4-alpha-carbinolamine dehydratase family.

The catalysed reaction is (4aS,6R)-4a-hydroxy-L-erythro-5,6,7,8-tetrahydrobiopterin = (6R)-L-erythro-6,7-dihydrobiopterin + H2O. This is Putative pterin-4-alpha-carbinolamine dehydratase from Burkholderia orbicola (strain MC0-3).